Reading from the N-terminus, the 27-residue chain is Cupiennin-3b (27 aa).

E27 carries the glutamic acid 1-amide modification.

As to expression, expressed by the venom gland.

It is found in the secreted. This Cupiennius salei (American wandering spider) protein is Cupiennin-3b.